The chain runs to 232 residues: Putative B3 domain-containing protein Os11g0242900 (232 aa).

The TF-B3 1 DNA-binding region spans 1-51; the sequence is MTVELEKIAGSFFISKGWKTFVHRTGLLSGQYIRFQVLTPSKINVLLFDKK. Residues 92-121 form a disordered region; sequence SHTSNKETSSDSRTESMTDIPSSSDNSGET. The segment covering 95–107 has biased composition (basic and acidic residues); that stretch reads SNKETSSDSRTES. Over residues 108-121 the composition is skewed to polar residues; that stretch reads MTDIPSSSDNSGET. The segment at residues 140-232 is a DNA-binding region (TF-B3 2); the sequence is DIKNYISIIG…PNVKITIDVL (93 aa).

The protein localises to the nucleus. The protein is Putative B3 domain-containing protein Os11g0242900 of Oryza sativa subsp. japonica (Rice).